The primary structure comprises 327 residues: MAKPIRVLLYYKYVPIENAEQFAADHLAFCKSIGLKGRILVADEGINGTVSGEYETTQKYMDYVHSLPGMEDLWFKIDEEEEQAFKKMFVRYKKEIVHLGLEDNNFDSDINPLETTGAYLSPKEFKDALLDEDTVVLDTRNDYEYDLGHFRGAIRPDIRNFRELPQWVRDHKEEFMDKRVVVYCTGGVRCEKFSGWLVREGYKDVGQLHGGIVTYGKDPEVQGELWDGKLYVFDERIAVDVNHVDPIVVGKDWFDGTPCERYVNCGNPFCNRRILTSEENEDKYLRGCSHECRVHPRNRYVSENDLSQEEVVERLAAIGESLDVTPA.

A Rhodanese domain is found at 130-224 (LDEDTVVLDT…YGKDPEVQGE (95 aa)). C184 acts as the Cysteine persulfide intermediate in catalysis.

This sequence belongs to the TrhO family.

The enzyme catalyses uridine(34) in tRNA + AH2 + O2 = 5-hydroxyuridine(34) in tRNA + A + H2O. In terms of biological role, catalyzes oxygen-dependent 5-hydroxyuridine (ho5U) modification at position 34 in tRNAs. This chain is tRNA uridine(34) hydroxylase, found in Streptococcus thermophilus (strain ATCC BAA-250 / LMG 18311).